Consider the following 80-residue polypeptide: MAKFASIITFIYAALVLFAAFEVPTMVEAQKLCEKPSGTWSGVCGNSNACKNQCINLEGAKHGSCNYVFPAHKCICYVPC.

A signal peptide spans 1-29 (MAKFASIITFIYAALVLFAAFEVPTMVEA). Glutamine 30 is modified (pyrrolidone carboxylic acid). Intrachain disulfides connect cysteine 33/cysteine 80, cysteine 44/cysteine 65, cysteine 50/cysteine 74, and cysteine 54/cysteine 76.

The protein belongs to the DEFL family.

It is found in the secreted. Confers broad-spectrum resistance to pathogens. The chain is Putative defensin-like protein 15 (PDF1.2B) from Arabidopsis thaliana (Mouse-ear cress).